The primary structure comprises 405 residues: MIYNDRLGEVMDLNTLIKIIEKVGRIEIEDIKITADELIINIPSAPPIVIPQTPSIKEKLAEEGIIEIKDVPELDWEPPVEKYPGYIREVQFGKPKSEGGRGKVVKIGGQRALYRFEEPQPNPPVVTFDIFDIPMPGLPKPIRQFFQDVMEDPCEWAKKCVKEFGADMITIHHISTDPKIKDKSPKEAAKLMEDLLQAVDVPFVIGGSGNPQKDPLVLEACAEVAEGDRCLLASANLELDYKKIVDAAMKYDHNVLAWSIMDPNMARDLNRKLVEAGLDPNRIVMDPTTCALGYGIEFSINAMVRLRLNGLKGDELVNMPMSSGTTNAIGAREAWMNNPEWGPREYRLPLWEITTGITMMMCGVDLFMMLNPISVKTLKEIGKTLTTKPGEVKLNTNNYEWIVSP.

This sequence belongs to the CdhD family. In terms of assembly, heterodimer of delta and gamma chains. The ACDS complex is made up of alpha, epsilon, beta, gamma and delta chains with a probable stoichiometry of (alpha(2)epsilon(2))(4)-beta(8)-(gamma(1)delta(1))(8).

Functionally, part of a complex that catalyzes the reversible cleavage of acetyl-CoA, allowing autotrophic growth from CO(2). Probably maintains the overall quaternary structure of the ACDS complex. The chain is Acetyl-CoA decarbonylase/synthase complex subunit delta from Methanocaldococcus jannaschii (strain ATCC 43067 / DSM 2661 / JAL-1 / JCM 10045 / NBRC 100440) (Methanococcus jannaschii).